A 392-amino-acid chain; its full sequence is MTIRNQRLSLLKQPISSTLNQHLIDYPTPSNLSYWWGFGSLAGICLVIQIVTGVFLAMHYTPHVDLAFNSVEHVMRDVEGGWLLRYMHANGASMFLIVVHLHIFRGLYHASYSSPREFVRCLGVVIFLLMIVTAFTGYVPPWGQMSFWGATVITSLASAIPVVGDTIVTWLWGGFSVDNATLNRFFSLHHLLPFILVGASLLHLAALHQYGSNNPLGVHSEMDQISFYPYFYVKDLVGWVAFAIFFSIWIFYAPNVLGHPDNYIPANPMPTPPHIVPEWYFLPIHAILRSIPDKSGGVAAIAPVFICLLALPFFKSMYVRSSSFRPIHQGIFWLLLADRLLLGWIGCQPVEAPFVTIGQIPPFVFFLFFAITPIPGRVGRGIPNYYTDETDQ.

4 helical membrane passes run 38-58 (FGSL…FLAM), 82-104 (WLLR…LHIF), 119-139 (VRCL…TGYV), and 185-205 (FFSL…LHLA). The heme b site is built by His-88 and His-102. 2 residues coordinate heme b: His-189 and His-203. His-208 is an a ubiquinone binding site. The next 4 helical transmembrane spans lie at 231–251 (FYVK…IWIF), 295–315 (SGGV…PFFK), 327–347 (IHQG…WIGC), and 354–373 (FVTI…AITP).

The protein belongs to the cytochrome b family. As to quaternary structure, the main subunits of complex b-c1 are: cytochrome b, cytochrome c1 and the Rieske protein. Heme b serves as cofactor.

It is found in the mitochondrion inner membrane. Its function is as follows. Component of the ubiquinol-cytochrome c reductase complex (complex III or cytochrome b-c1 complex) that is part of the mitochondrial respiratory chain. The b-c1 complex mediates electron transfer from ubiquinol to cytochrome c. Contributes to the generation of a proton gradient across the mitochondrial membrane that is then used for ATP synthesis. This Pisum sativum (Garden pea) protein is Cytochrome b (MT-CYB).